The following is a 339-amino-acid chain: UDP-N-acetylglucosamine--N-acetylmuramyl-(pentapeptide) pyrophosphoryl-undecaprenol N-acetylglucosamine transferase (339 aa).

Residues 11–13 (TGG), Asn-127, Arg-170, Ser-188, Ile-235, and Gln-280 each bind UDP-N-acetyl-alpha-D-glucosamine.

This sequence belongs to the glycosyltransferase 28 family. MurG subfamily.

Its subcellular location is the cell inner membrane. It carries out the reaction di-trans,octa-cis-undecaprenyl diphospho-N-acetyl-alpha-D-muramoyl-L-alanyl-D-glutamyl-meso-2,6-diaminopimeloyl-D-alanyl-D-alanine + UDP-N-acetyl-alpha-D-glucosamine = di-trans,octa-cis-undecaprenyl diphospho-[N-acetyl-alpha-D-glucosaminyl-(1-&gt;4)]-N-acetyl-alpha-D-muramoyl-L-alanyl-D-glutamyl-meso-2,6-diaminopimeloyl-D-alanyl-D-alanine + UDP + H(+). It functions in the pathway cell wall biogenesis; peptidoglycan biosynthesis. Its function is as follows. Cell wall formation. Catalyzes the transfer of a GlcNAc subunit on undecaprenyl-pyrophosphoryl-MurNAc-pentapeptide (lipid intermediate I) to form undecaprenyl-pyrophosphoryl-MurNAc-(pentapeptide)GlcNAc (lipid intermediate II). This chain is UDP-N-acetylglucosamine--N-acetylmuramyl-(pentapeptide) pyrophosphoryl-undecaprenol N-acetylglucosamine transferase, found in Thermotoga sp. (strain RQ2).